We begin with the raw amino-acid sequence, 160 residues long: MGVFNYEVETPSVIPAARLFKSYVLDGDKLIPKVAPQAITSVENVEGNGGPGTIKNITFGEGSRYKYVKERVDEVDNTNFTYSYTVIEGDVLGDKLEKVCHELKIVAAPGGGSILKISSKFHAKGDHEINAEEMKGAKEMAEKLLRAVETYLLAHSAEYN.

Belongs to the BetVI family.

This Corylus avellana (European hazel) protein is Major pollen allergen Cor a 1 isoforms 5, 6, 11 and 16.